A 400-amino-acid polypeptide reads, in one-letter code: Cytohesin-2 (400 aa).

Residues 10–63 are a coiled coil; that stretch reads DLTPEERMELENIRRRKQELLVEIQRLREELSEAMSEVEGLEANEGSKTLQRNR. The region spanning 72–201 is the SEC7 domain; the sequence is FNMDPKKGIQ…VIMLNTSLHN (130 aa). A PH domain is found at 259–376; that stretch reads NPDREGWLLK…WIKSIQAAVS (118 aa). A 1,2-diacyl-sn-glycero-3-phospho-(1D-myo-inositol-3,4,5-trisphosphate)-binding positions include 268-276, Arg280, Tyr291, Arg301, Lys339, Asn350, and His351; that span reads KLGGGRVKT. A C-terminal autoinhibitory region region spans residues 387–395; that stretch reads RKKRISVKK.

In terms of assembly, heteromer. Composed of TAMALIN, CYTH2 and at least one GRM1. Interacts with ARRB1. Interacts with ARL4D; the interaction is direct. Directly interacts with CCDC120 through the coiled coil domain; this interaction stabilizes CCDC120, possibly by preventing its ubiquitination, and is required for neurite growth in neuroblastoma cells. Interacts with ARF1. Interacts with FRMD4A. Interacts (via N-terminal domain) with INAVA (via N-terminal domain). In terms of tissue distribution, widely expressed.

The protein localises to the cell membrane. The protein resides in the cytoplasm. It is found in the cell projection. It localises to the growth cone. Its subcellular location is the cell junction. The protein localises to the tight junction. The protein resides in the adherens junction. In terms of biological role, acts as a guanine-nucleotide exchange factor (GEF). Promotes guanine-nucleotide exchange on ARF1, ARF3 and ARF6. Activates ARF factors through replacement of GDP with GTP. The cell membrane form, in association with ARL4 proteins, recruits ARF6 to the plasma membrane. Involved in neurite growth. This chain is Cytohesin-2, found in Homo sapiens (Human).